The following is a 151-amino-acid chain: Dehydrin Rab16D (151 aa).

Residues 1–138 form a disordered region; that stretch reads MEYQGQHGGH…TADAGGEKKG (138 aa). Residues 39 to 51 show a composition bias toward basic and acidic residues; it reads EPAREDKKTDGVL. 2 stretches are compositionally biased toward low complexity: residues 90–105 and 117–132; these read GNNQ…TTTG and IATG…TADA.

Belongs to the plant dehydrin family.

The protein is Dehydrin Rab16D (RAB16D) of Oryza sativa subsp. indica (Rice).